Reading from the N-terminus, the 345-residue chain is Phosphoribosylformylglycinamidine cyclo-ligase (345 aa).

The protein belongs to the AIR synthase family.

The protein resides in the cytoplasm. It carries out the reaction 2-formamido-N(1)-(5-O-phospho-beta-D-ribosyl)acetamidine + ATP = 5-amino-1-(5-phospho-beta-D-ribosyl)imidazole + ADP + phosphate + H(+). Its pathway is purine metabolism; IMP biosynthesis via de novo pathway; 5-amino-1-(5-phospho-D-ribosyl)imidazole from N(2)-formyl-N(1)-(5-phospho-D-ribosyl)glycinamide: step 2/2. The sequence is that of Phosphoribosylformylglycinamidine cyclo-ligase from Mannheimia succiniciproducens (strain KCTC 0769BP / MBEL55E).